Reading from the N-terminus, the 1379-residue chain is DNA-directed RNA polymerase subunit beta (1379 aa).

Belongs to the RNA polymerase beta chain family. As to quaternary structure, the RNAP catalytic core consists of 2 alpha, 1 beta, 1 beta' and 1 omega subunit. When a sigma factor is associated with the core the holoenzyme is formed, which can initiate transcription.

It carries out the reaction RNA(n) + a ribonucleoside 5'-triphosphate = RNA(n+1) + diphosphate. Its function is as follows. DNA-dependent RNA polymerase catalyzes the transcription of DNA into RNA using the four ribonucleoside triphosphates as substrates. This chain is DNA-directed RNA polymerase subunit beta, found in Chelativorans sp. (strain BNC1).